The chain runs to 191 residues: Orotate phosphoribosyltransferase (191 aa).

5-phospho-alpha-D-ribose 1-diphosphate is bound at residue 114-122 (EDVVTTGKS). 2 residues coordinate orotate: Thr-118 and Arg-146.

The protein belongs to the purine/pyrimidine phosphoribosyltransferase family. PyrE subfamily. As to quaternary structure, homodimer. The cofactor is Mg(2+).

The enzyme catalyses orotidine 5'-phosphate + diphosphate = orotate + 5-phospho-alpha-D-ribose 1-diphosphate. It participates in pyrimidine metabolism; UMP biosynthesis via de novo pathway; UMP from orotate: step 1/2. Catalyzes the transfer of a ribosyl phosphate group from 5-phosphoribose 1-diphosphate to orotate, leading to the formation of orotidine monophosphate (OMP). This Clostridium botulinum (strain Kyoto / Type A2) protein is Orotate phosphoribosyltransferase.